The sequence spans 186 residues: Ribosome maturation factor RimM (186 aa).

The PRC barrel domain occupies 100-182 (NEGEYHVSDL…RIEINPPVGL (83 aa)).

The protein belongs to the RimM family. As to quaternary structure, binds ribosomal protein uS19.

The protein localises to the cytoplasm. An accessory protein needed during the final step in the assembly of 30S ribosomal subunit, possibly for assembly of the head region. Essential for efficient processing of 16S rRNA. May be needed both before and after RbfA during the maturation of 16S rRNA. It has affinity for free ribosomal 30S subunits but not for 70S ribosomes. The chain is Ribosome maturation factor RimM from Rippkaea orientalis (strain PCC 8801 / RF-1) (Cyanothece sp. (strain PCC 8801)).